Here is a 358-residue protein sequence, read N- to C-terminus: UDP-3-O-acylglucosamine N-acyltransferase (358 aa).

H252 acts as the Proton acceptor in catalysis.

This sequence belongs to the transferase hexapeptide repeat family. LpxD subfamily. Homotrimer.

The catalysed reaction is a UDP-3-O-[(3R)-3-hydroxyacyl]-alpha-D-glucosamine + a (3R)-hydroxyacyl-[ACP] = a UDP-2-N,3-O-bis[(3R)-3-hydroxyacyl]-alpha-D-glucosamine + holo-[ACP] + H(+). Its pathway is bacterial outer membrane biogenesis; LPS lipid A biosynthesis. Its function is as follows. Catalyzes the N-acylation of UDP-3-O-acylglucosamine using 3-hydroxyacyl-ACP as the acyl donor. Is involved in the biosynthesis of lipid A, a phosphorylated glycolipid that anchors the lipopolysaccharide to the outer membrane of the cell. The chain is UDP-3-O-acylglucosamine N-acyltransferase from Paraburkholderia phymatum (strain DSM 17167 / CIP 108236 / LMG 21445 / STM815) (Burkholderia phymatum).